The following is a 318-amino-acid chain: D-alanine--D-alanine ligase B (318 aa).

The region spanning 116–311 (KQVWQSLGIP…FQQLVLAILA (196 aa)) is the ATP-grasp domain. 142 to 197 (STELGFPLIVKPAHEGSSIGMAKVNSTQELVAAWQDAAKYDSQVLVEQWIHGPEFT) provides a ligand contact to ATP. Mg(2+) contacts are provided by Asp-265, Glu-278, and Asn-280.

This sequence belongs to the D-alanine--D-alanine ligase family. Requires Mg(2+) as cofactor. It depends on Mn(2+) as a cofactor.

It is found in the cytoplasm. It carries out the reaction 2 D-alanine + ATP = D-alanyl-D-alanine + ADP + phosphate + H(+). It participates in cell wall biogenesis; peptidoglycan biosynthesis. In terms of biological role, cell wall formation. The sequence is that of D-alanine--D-alanine ligase B from Pseudomonas putida (strain ATCC 47054 / DSM 6125 / CFBP 8728 / NCIMB 11950 / KT2440).